Reading from the N-terminus, the 368-residue chain is MSAFQPTIKRRESTKIYVGNVPIGGDAPIAVQSMTNTRTTDVEATVAQIKSLERVGADIVRVSVPTMDAAEAFKQIKQQVNVPLVADIHFDYRIALKVAEYGVDCLRINPGNIGREDRVRAVVDCARDKNIPIRIGVNAGSLEKDLQEKYGEPTPEALLESALRHVEILDRLNFDQFKVSVKASDVFLAVESYRLLAKAIKQPLHLGITEAGGARAGAVKSAVGLGMLLAEGIGDTLRISLAADPIEEIKVGFDILKSLRIRSRGINFIACPTCSRQEFDVIGTVNALEQRLEDIITPMDVSIIGCVVNGPGEALISDLGVTGGNKKSGYYLDGERQKERFDNEDIVNQLEAKIRAKVARQDPKNRII.

Positions 271, 274, 306, and 313 each coordinate [4Fe-4S] cluster.

Belongs to the IspG family. It depends on [4Fe-4S] cluster as a cofactor.

It catalyses the reaction (2E)-4-hydroxy-3-methylbut-2-enyl diphosphate + oxidized [flavodoxin] + H2O + 2 H(+) = 2-C-methyl-D-erythritol 2,4-cyclic diphosphate + reduced [flavodoxin]. Its pathway is isoprenoid biosynthesis; isopentenyl diphosphate biosynthesis via DXP pathway; isopentenyl diphosphate from 1-deoxy-D-xylulose 5-phosphate: step 5/6. In terms of biological role, converts 2C-methyl-D-erythritol 2,4-cyclodiphosphate (ME-2,4cPP) into 1-hydroxy-2-methyl-2-(E)-butenyl 4-diphosphate. The polypeptide is 4-hydroxy-3-methylbut-2-en-1-yl diphosphate synthase (flavodoxin) (Haemophilus influenzae (strain PittGG)).